The primary structure comprises 128 residues: Aspartate 1-decarboxylase (128 aa).

Ser25 serves as the catalytic Schiff-base intermediate with substrate; via pyruvic acid. Ser25 is subject to Pyruvic acid (Ser). Thr57 contacts substrate. Tyr58 acts as the Proton donor in catalysis. 73–75 (GAA) lines the substrate pocket.

This sequence belongs to the PanD family. As to quaternary structure, heterooctamer of four alpha and four beta subunits. The cofactor is pyruvate. Is synthesized initially as an inactive proenzyme, which is activated by self-cleavage at a specific serine bond to produce a beta-subunit with a hydroxyl group at its C-terminus and an alpha-subunit with a pyruvoyl group at its N-terminus.

It is found in the cytoplasm. The catalysed reaction is L-aspartate + H(+) = beta-alanine + CO2. It functions in the pathway cofactor biosynthesis; (R)-pantothenate biosynthesis; beta-alanine from L-aspartate: step 1/1. In terms of biological role, catalyzes the pyruvoyl-dependent decarboxylation of aspartate to produce beta-alanine. This chain is Aspartate 1-decarboxylase, found in Chlorobaculum parvum (strain DSM 263 / NCIMB 8327) (Chlorobium vibrioforme subsp. thiosulfatophilum).